The sequence spans 363 residues: Mitochondrial RNA-splicing protein MRS1 (363 aa).

Its subcellular location is the mitochondrion. In terms of biological role, function in mitochondrial RNA splicing in the excision of mitochondrial group I introns aI1 and aI5 beta from COX1 and bI3 from COB transcripts and thus would be involved in obtaining the correct structure of the intron, to allow the RNA catalyzed reactions to occur. This is Mitochondrial RNA-splicing protein MRS1 (MRS1) from Saccharomyces paradoxus (Yeast).